Reading from the N-terminus, the 520-residue chain is Hydroxymethylglutaryl-CoA synthase, cytoplasmic (520 aa).

Position 4 is a phosphoserine (Ser-4). Asp-43 and Ala-44 together coordinate (3S)-3-hydroxy-3-methylglutaryl-CoA. 44 to 46 (AGK) serves as a coordination point for CoA. Lys-46 carries the post-translational modification N6-acetyllysine. The active-site Proton donor/acceptor is the Glu-95. 5 residues coordinate (3S)-3-hydroxy-3-methylglutaryl-CoA: Cys-129, Asn-167, Thr-171, Ser-221, and His-264. The active-site Acyl-thioester intermediate is Cys-129. Asn-167 contributes to the CoA binding site. CoA is bound at residue Ser-221. His-264 acts as the Proton donor/acceptor in catalysis. CoA is bound by residues Lys-269 and Lys-273. Lys-273, Asn-343, and Ser-377 together coordinate (3S)-3-hydroxy-3-methylglutaryl-CoA. At Lys-273 the chain carries N6-acetyllysine. The segment at 486–520 (SNTATEHIPSPAKKVPRLPATAAESESAVISNGEH) is disordered. Phosphoserine occurs at positions 495 and 516.

Belongs to the thiolase-like superfamily. HMG-CoA synthase family. In terms of assembly, homodimer.

The protein localises to the cytoplasm. It carries out the reaction acetoacetyl-CoA + acetyl-CoA + H2O = (3S)-3-hydroxy-3-methylglutaryl-CoA + CoA + H(+). It functions in the pathway metabolic intermediate biosynthesis; (R)-mevalonate biosynthesis; (R)-mevalonate from acetyl-CoA: step 2/3. This enzyme condenses acetyl-CoA with acetoacetyl-CoA to form HMG-CoA, which is converted by HMG-CoA reductase (HMGCR) into mevalonate, a precursor for cholesterol synthesis. The protein is Hydroxymethylglutaryl-CoA synthase, cytoplasmic of Cricetulus griseus (Chinese hamster).